A 374-amino-acid polypeptide reads, in one-letter code: Ribosomal large subunit pseudouridine synthase D (374 aa).

The interval 1 to 20 (MQNTSFDNESDYSDDSDFAS) is disordered. Acidic residues predominate over residues 8–17 (NESDYSDDSD). The S4 RNA-binding domain maps to 39–112 (GRLDAVLAKL…MALDIVYEDD (74 aa)). Asp160 is an active-site residue.

This sequence belongs to the pseudouridine synthase RluA family.

It is found in the cytoplasm. It catalyses the reaction uridine(1911/1915/1917) in 23S rRNA = pseudouridine(1911/1915/1917) in 23S rRNA. In terms of biological role, responsible for synthesis of pseudouridine from uracil at positions 1911, 1915 and 1917 in 23S ribosomal RNA. The polypeptide is Ribosomal large subunit pseudouridine synthase D (rluD) (Neisseria meningitidis serogroup A / serotype 4A (strain DSM 15465 / Z2491)).